Here is a 137-residue protein sequence, read N- to C-terminus: Ribosome-binding factor A (137 aa).

It belongs to the RbfA family. As to quaternary structure, monomer. Binds 30S ribosomal subunits, but not 50S ribosomal subunits or 70S ribosomes.

It localises to the cytoplasm. Its function is as follows. One of several proteins that assist in the late maturation steps of the functional core of the 30S ribosomal subunit. Associates with free 30S ribosomal subunits (but not with 30S subunits that are part of 70S ribosomes or polysomes). Required for efficient processing of 16S rRNA. May interact with the 5'-terminal helix region of 16S rRNA. The sequence is that of Ribosome-binding factor A from Trichodesmium erythraeum (strain IMS101).